A 104-amino-acid polypeptide reads, in one-letter code: Elicitor peptide 6 (104 aa).

Residues 1–81 (MEVNGEEERR…TVEETGFMAR (81 aa)) constitute a propeptide that is removed on maturation. The segment covering 48–61 (SSSIPPSSSSSSPS) has biased composition (low complexity). The disordered stretch occupies residues 48 to 104 (SSSIPPSSSSSSPSLVEEEDSGTETVEETGFMARITAVLRRRPRPPPYSSGRPGQNN). A compositionally biased stretch (acidic residues) spans 63-74 (VEEEDSGTETVE).

Belongs to the brassicaceae elicitor peptide family.

Its function is as follows. Elicitor of plant defense. The polypeptide is Elicitor peptide 6 (PEP6) (Arabidopsis thaliana (Mouse-ear cress)).